Consider the following 126-residue polypeptide: Protein Wnt-1 (126 aa).

Serine 1 carries O-palmitoleoyl serine; by PORCN lipidation. A disulfide bridge links cysteine 92 with cysteine 107. Residues asparagine 93 and asparagine 123 are each glycosylated (N-linked (GlcNAc...) asparagine).

It belongs to the Wnt family. Post-translationally, palmitoleoylation is required for efficient binding to frizzled receptors. Palmitoleoylation is necessary for proper trafficking to cell surface. Depalmitoleoylated by NOTUM, leading to inhibit Wnt signaling pathway.

It localises to the secreted. Its subcellular location is the extracellular space. It is found in the extracellular matrix. Functionally, ligand for members of the frizzled family of seven transmembrane receptors. Acts in the canonical Wnt signaling pathway by promoting beta-catenin-dependent transcriptional activation. Plays an essential role in the development of the embryonic brain and central nervous system (CNS). Has a role in osteoblast function, bone development and bone homeostasis. The chain is Protein Wnt-1 (WNT-1) from Pituophis melanoleucus (Pine snake).